The sequence spans 464 residues: Probable acid phosphatase DDB_G0284753 (464 aa).

Residues 1–29 (MFSYFRKSQQKVEENQNGGGGDGRGSGIK) are disordered. Over residues 17-26 (NGGGGDGRGS) the composition is skewed to gly residues. The active-site Nucleophile is histidine 81. The disordered stretch occupies residues 180–202 (SFTDEQEKSPHHSSFLVKPDNEE). Residue aspartate 347 is the Proton donor of the active site.

This sequence belongs to the histidine acid phosphatase family.

It carries out the reaction a phosphate monoester + H2O = an alcohol + phosphate. The chain is Probable acid phosphatase DDB_G0284753 from Dictyostelium discoideum (Social amoeba).